Reading from the N-terminus, the 485-residue chain is Katanin p60 ATPase-containing subunit A1 (485 aa).

The disordered stretch occupies residues 101 to 173; that stretch reads HRSSPCVVRK…KNKAEAVETE (73 aa). Over residues 141 to 173 the composition is skewed to basic and acidic residues; that stretch reads NGDKGKPQKSKEKKENPSKPKEDKNKAEAVETE. Residue 244 to 251 participates in ATP binding; it reads GPPGTGKT.

The protein belongs to the AAA ATPase family. Katanin p60 subunit A1 subfamily. As to quaternary structure, can homooligomerize into hexameric rings, which may be promoted by interaction with microtubules. Interacts with katnb1, which may serve as a targeting subunit.

It localises to the cytoplasm. Its subcellular location is the cytoskeleton. It is found in the microtubule organizing center. The protein localises to the centrosome. The protein resides in the spindle pole. It localises to the spindle. The enzyme catalyses n ATP + n H2O + a microtubule = n ADP + n phosphate + (n+1) alpha/beta tubulin heterodimers.. With respect to regulation, ATPase activity is stimulated by microtubules, which promote homooligomerization. ATP-dependent microtubule severing is stimulated by interaction with katnb1. Its function is as follows. Catalytic subunit of a complex which severs microtubules in an ATP-dependent manner. Microtubule severing may promote rapid reorganization of cellular microtubule arrays and the release of microtubules from the centrosome following nucleation. The sequence is that of Katanin p60 ATPase-containing subunit A1 (katna1) from Danio rerio (Zebrafish).